The chain runs to 235 residues: Serine protease SplA (235 aa).

A signal peptide spans 1 to 35 (MNENVMVKGLTALTILTSLGFAENISNQPHSIAKA). Residues His-74, Asp-113, and Ser-189 each act as charge relay system in the active site.

The protein belongs to the peptidase S1B family.

It is found in the secreted. The polypeptide is Serine protease SplA (splA) (Staphylococcus aureus (strain MSSA476)).